Consider the following 474-residue polypeptide: Phosphomannomutase (474 aa).

Catalysis depends on Ser-101, which acts as the Phosphoserine intermediate. Ser-101, Asp-242, Asp-244, and Asp-246 together coordinate Mg(2+).

The protein belongs to the phosphohexose mutase family. It depends on Mg(2+) as a cofactor.

It catalyses the reaction alpha-D-mannose 1-phosphate = D-mannose 6-phosphate. The chain is Phosphomannomutase (noeK) from Sinorhizobium fredii (strain NBRC 101917 / NGR234).